The primary structure comprises 299 residues: Ribosome-inactivating protein saporin-6 (299 aa).

Residues 1-24 (MKIYVVATIAWILLQFSAWTTTDA) form the signal peptide. The active site involves Glu-200. Residues 278–299 (SSNEANSTVRHYGPLKPTLLIT) constitute a propeptide that is removed on maturation. Asn-283 is a glycosylation site (N-linked (GlcNAc...) asparagine).

This sequence belongs to the ribosome-inactivating protein family. Type 1 RIP subfamily. As to expression, seeds and leaves of the plant.

It catalyses the reaction Endohydrolysis of the N-glycosidic bond at one specific adenosine on the 28S rRNA.. In terms of biological role, ribosome-inactivating protein of type 1, inhibits protein synthesis in animal cells. Useful as immunotoxin for pharmacological applications. The protein is Ribosome-inactivating protein saporin-6 (SAP6) of Saponaria officinalis (Common soapwort).